The sequence spans 172 residues: L-methionine sulfoximine/L-methionine sulfone acetyltransferase (172 aa).

The N-acetyltransferase domain maps to 3–166; the sequence is ASIRDAGVAD…DLTFMQLNLD (164 aa). Residues 75–77 and 85–87 each bind substrate; these read RPF and EHS. Acetyl-CoA contacts are provided by residues 88–90, 96–101, and asparagine 127; these read VYV and GKGLGV.

Homodimer.

The catalysed reaction is L-methionine sulfoximine + acetyl-CoA = N-acetyl-L-methionine sulfoximine + CoA + H(+). The enzyme catalyses L-methionine sulfone + acetyl-CoA = N-acetyl-L-methionine sulfone + CoA + H(+). Functionally, plays a role in the resistance against the toxic effects of L-methionine sulfoximine (MSX), a rare amino acid, which inhibits glutamine synthetase (GlnA). Catalyzes the acetylation of L-methionine sulfoximine (MSX). It can also use L-methionine sulfone (MSO). The polypeptide is L-methionine sulfoximine/L-methionine sulfone acetyltransferase (Pseudomonas paraeruginosa (strain DSM 24068 / PA7) (Pseudomonas aeruginosa (strain PA7))).